The following is a 496-amino-acid chain: Proline--tRNA ligase (496 aa).

The protein belongs to the class-II aminoacyl-tRNA synthetase family. ProS type 3 subfamily. In terms of assembly, homodimer.

It is found in the cytoplasm. The catalysed reaction is tRNA(Pro) + L-proline + ATP = L-prolyl-tRNA(Pro) + AMP + diphosphate. In terms of biological role, catalyzes the attachment of proline to tRNA(Pro) in a two-step reaction: proline is first activated by ATP to form Pro-AMP and then transferred to the acceptor end of tRNA(Pro). This is Proline--tRNA ligase from Phocaeicola vulgatus (strain ATCC 8482 / DSM 1447 / JCM 5826 / CCUG 4940 / NBRC 14291 / NCTC 11154) (Bacteroides vulgatus).